A 258-amino-acid chain; its full sequence is Phosphonates import ATP-binding protein PhnC 1 (258 aa).

Positions 2 to 246 (IEFKDVGLVY…TFEEIYGRSI (245 aa)) constitute an ABC transporter domain. 35–42 (GLSGAGKS) is an ATP binding site.

The protein belongs to the ABC transporter superfamily. Phosphonates importer (TC 3.A.1.9.1) family. The complex is composed of two ATP-binding proteins (PhnC), two transmembrane proteins (PhnE) and a solute-binding protein (PhnD).

It is found in the cell membrane. The catalysed reaction is phosphonate(out) + ATP + H2O = phosphonate(in) + ADP + phosphate + H(+). Part of the ABC transporter complex PhnCDE involved in phosphonates import. Responsible for energy coupling to the transport system. The protein is Phosphonates import ATP-binding protein PhnC 1 of Oceanobacillus iheyensis (strain DSM 14371 / CIP 107618 / JCM 11309 / KCTC 3954 / HTE831).